The chain runs to 423 residues: Serine--tRNA ligase (423 aa).

229 to 231 (TAE) provides a ligand contact to L-serine. ATP is bound at residue 260-262 (RRE). L-serine is bound at residue glutamate 283. 347–350 (EISS) contributes to the ATP binding site. Serine 383 contributes to the L-serine binding site.

The protein belongs to the class-II aminoacyl-tRNA synthetase family. Type-1 seryl-tRNA synthetase subfamily. Homodimer. The tRNA molecule binds across the dimer.

It is found in the cytoplasm. It carries out the reaction tRNA(Ser) + L-serine + ATP = L-seryl-tRNA(Ser) + AMP + diphosphate + H(+). The catalysed reaction is tRNA(Sec) + L-serine + ATP = L-seryl-tRNA(Sec) + AMP + diphosphate + H(+). It participates in aminoacyl-tRNA biosynthesis; selenocysteinyl-tRNA(Sec) biosynthesis; L-seryl-tRNA(Sec) from L-serine and tRNA(Sec): step 1/1. Functionally, catalyzes the attachment of serine to tRNA(Ser). Is also able to aminoacylate tRNA(Sec) with serine, to form the misacylated tRNA L-seryl-tRNA(Sec), which will be further converted into selenocysteinyl-tRNA(Sec). The chain is Serine--tRNA ligase from Trichlorobacter lovleyi (strain ATCC BAA-1151 / DSM 17278 / SZ) (Geobacter lovleyi).